The chain runs to 27 residues: Potassium channel toxin alpha-KTx 32.1 (27 aa).

Intrachain disulfides connect C5–C18 and C12–C25.

Expressed by the venom gland.

It is found in the secreted. In terms of biological role, blocker of voltage-gated potassium channels. Inhibits voltage-gated potassium channels Kv1.2/KCNA2 (Kd=0.96 nM) and Kv1.3/KCNA3 (Kd=1.3 nM). Does not inhibit Kv1.1/KCNA1, Kv1.5/KCNA5, Kv11.1/KCNH2/ERG1, KCa1.1/KCNMA1, KCa3.1/KCNN4, NaV1.5/SCN5A, NaV1.4/SCN4A or HV1/HVCN1. Strongly inhibits the expression of the activation markers interleukin-2 receptor and CD40 ligand/CD40LG in anti-CD3-activated CD4(+) TEM lymphocytes. This Centruroides margaritatus (Central American bark Scorpion) protein is Potassium channel toxin alpha-KTx 32.1.